Reading from the N-terminus, the 277-residue chain is Large ribosomal subunit protein uL2 (277 aa).

A disordered region spans residues 223–264 (VAMNPVDHPHGGGEGKTAAGRHPVSPWGTPSKGSRTRRNKRT).

It belongs to the universal ribosomal protein uL2 family. In terms of assembly, part of the 50S ribosomal subunit. Forms a bridge to the 30S subunit in the 70S ribosome.

One of the primary rRNA binding proteins. Required for association of the 30S and 50S subunits to form the 70S ribosome, for tRNA binding and peptide bond formation. It has been suggested to have peptidyltransferase activity; this is somewhat controversial. Makes several contacts with the 16S rRNA in the 70S ribosome. This is Large ribosomal subunit protein uL2 from Nitrosomonas eutropha (strain DSM 101675 / C91 / Nm57).